Here is a 248-residue protein sequence, read N- to C-terminus: Secreted and transmembrane protein 1 (248 aa).

An N-terminal signal peptide occupies residues 1–28; sequence MQTCPLAFPGHVSQALGTLLFLAASLSA. Over 29–145 the chain is Extracellular; sequence QNEGWDSPIC…AEPQSAPDTG (117 aa). A disulfide bond links Cys38 and Cys55. The N-linked (GlcNAc...) asparagine glycan is linked to Asn56. Residues 146-166 form a helical membrane-spanning segment; sequence FWPVPAVVTAVFILLVALVMF. At 167–248 the chain is on the cytoplasmic side; that stretch reads AWYRCRCSQQ…QPLFPYAADP (82 aa).

The protein belongs to the SECTM family. As to quaternary structure, interacts with CD7. As to expression, detected at the highest levels in peripheral blood leukocytes and breast cancer cell lines. Found in leukocytes of the myeloid lineage, with the strongest expression observed in granulocytes and no detectable expression in lymphocytes. Expressed in thymic epithelial cells and fibroblasts.

Its subcellular location is the cell membrane. It localises to the secreted. In terms of biological role, may be involved in thymocyte signaling. The polypeptide is Secreted and transmembrane protein 1 (SECTM1) (Homo sapiens (Human)).